The sequence spans 143 residues: Nucleoside diphosphate kinase (143 aa).

ATP is bound by residues lysine 11, phenylalanine 59, arginine 87, threonine 93, arginine 104, and asparagine 114. The active-site Pros-phosphohistidine intermediate is histidine 117.

Belongs to the NDK family. In terms of assembly, homotetramer. Mg(2+) serves as cofactor.

It is found in the cytoplasm. The enzyme catalyses a 2'-deoxyribonucleoside 5'-diphosphate + ATP = a 2'-deoxyribonucleoside 5'-triphosphate + ADP. The catalysed reaction is a ribonucleoside 5'-diphosphate + ATP = a ribonucleoside 5'-triphosphate + ADP. In terms of biological role, major role in the synthesis of nucleoside triphosphates other than ATP. The ATP gamma phosphate is transferred to the NDP beta phosphate via a ping-pong mechanism, using a phosphorylated active-site intermediate. The protein is Nucleoside diphosphate kinase of Shewanella pealeana (strain ATCC 700345 / ANG-SQ1).